A 515-amino-acid polypeptide reads, in one-letter code: Phospholipase A1-Igamma1, chloroplastic (515 aa).

The transit peptide at 1 to 44 directs the protein to the chloroplast; the sequence is MATIPSHNLRPHTTNQRTQYSLSFRPHFSRSTLITFPARSSPAR. Positions 301–305 match the GXSXG motif; sequence GHSLG. S303 functions as the Acyl-ester intermediate in the catalytic mechanism. Active-site charge relay system residues include D366 and H422.

It belongs to the AB hydrolase superfamily. Lipase family. Ubiquitous. Highly expressed in leaves.

It localises to the plastid. The protein localises to the chloroplast. It carries out the reaction 1,2-dihexadecanoyl-sn-glycero-3-phosphocholine + H2O = 2-hexadecanoyl-sn-glycero-3-phosphocholine + hexadecanoate + H(+). The enzyme catalyses a 1,2-diacyl-3-O-(beta-D-galactosyl)-sn-glycerol + H2O = an acyl-3-O-(beta-D-galactosyl)-sn-glycerol + a fatty acid + H(+). It catalyses the reaction a 1,2-diacyl-3-O-[alpha-D-galactosyl-(1-&gt;6)-beta-D-galactosyl]-sn-glycerol + H2O = acyl-3-O-[alpha-D-galactosyl-(1-&gt;6)-beta-D-galactosyl]-sn-glycerol + a fatty acid + H(+). Acylhydrolase with a broad specificity. Catalyzes the hydrolysis of phosphatidylcholine at the sn-1 position. Moderate activity toward phosphatidylcholine (PC), monogalactosyldiacylglycerol (MGDG), digalactosyldiacylglycerol (DGDG) and triacylglycerol (TAG). May display dual sn-1/sn-2 substrate specificity. Could be involved in early wound response. The polypeptide is Phospholipase A1-Igamma1, chloroplastic (Arabidopsis thaliana (Mouse-ear cress)).